Reading from the N-terminus, the 1050-residue chain is TSC22 domain family protein 1 (1050 aa).

A required for interaction with TGFBR1 and promotion of TGF-beta signaling region spans residues 1-99 (MHQPPESTAA…SQAQLQGQPL (99 aa)). 8 disordered regions span residues 22–111 (MAHP…KKSG), 126–285 (ISSN…VSSA), 445–479 (QTPT…SVGS), 511–531 (DFSS…VQLQ), 581–609 (LAQP…QLQY), 720–740 (VQPP…PPSS), 795–847 (QLPT…GSLV), and 879–919 (SLAQ…VSDG). Low complexity predominate over residues 38–55 (ASALSAAGTGVSGAAPSS). The span at 58 to 71 (FPPPSSLLQPPPPA) shows a compositional bias: pro residues. Low complexity predominate over residues 85-97 (SLNLLSQAQLQGQ). Positions 134–143 (EDTESYDDLD) are enriched in acidic residues. The segment covering 217 to 241 (HPHHLHHHHHIHHGHHLHHGHHHSS) has biased composition (basic residues). At serine 265 the chain carries Phosphoserine. Over residues 458 to 476 (TSGSSVSSSVSTLSHYTES) the composition is skewed to low complexity. The span at 586–603 (LPYPQPAPPVQTPLPGAP) shows a compositional bias: pro residues. A compositionally biased stretch (low complexity) spans 906-919 (LSGDSGGVSAVSDG). Residues 983–1004 (LKEQIKELIEKNSQLEQENNLL) are leucine-zipper. Residues 1015-1050 (QFQAQLQTGSPPATTQPQGTTQPPAQPASQGSGSTA) form a disordered region. Residues 1021 to 1050 (QTGSPPATTQPQGTTQPPAQPASQGSGSTA) are compositionally biased toward low complexity.

This sequence belongs to the TSC-22/Dip/Bun family. Forms homodimers. Forms heterodimers. Component of a complex composed of TSC22D1 (via N-terminus), TGFBR1 and TGFBR2; the interaction between TSC22D1 and TGFBR1 is inhibited by SMAD7 and promoted by TGFB1. Interacts with SMAD7; the interaction requires TGF-beta and the interaction is inhibited by TGFBR1. Interacts with TPT1/fortilin; interaction results in the destabilization of TSC22D1 protein and prevents TSC22D1-mediated apoptosis. Interacts with SMAD4 (via N-terminus). Interacts with ACVRL1/ALK1, ACVR1/ALK2, BMPR1A/ALK3, ACVR1B/ALK4, BMPR1B/ALK6, ACVR2A/ACTRII, and BMPR2. Interacts with SMAD6. Interacts with TFE3; the interaction is enhanced in the presence of TGF-beta. In terms of assembly, forms a heterodimer with TSC22D4/THG1. As to quaternary structure, forms a heterodimer with TSC22D4/THG1. Interacts with histone H1-2. Interacts with GNL3. As to expression, ubiquitously expressed, abundantly expressed in testis, ovary, uterus, and lung. Expressed in cardiomyocytes.

Its subcellular location is the cytoplasm. The protein localises to the nucleus. It localises to the cell membrane. The protein resides in the mitochondrion. Functionally, transcriptional repressor. Acts on the C-type natriuretic peptide (CNP) promoter. Acts to promote CASP3-mediated apoptosis. Positively regulates TGF-beta signaling by interacting with SMAD7 which inhibits binding of SMAD7 to TGFBR1, preventing recruitment of SMURF ubiquitin ligases to TGFBR1 and inhibiting SMURF-mediated ubiquitination and degradation of TGFBR1. Contributes to enhancement of TGF-beta signaling by binding to and modulating the transcription activator activity of SMAD4. Promotes TGF-beta-induced transcription of COL1A2; via its interaction with TFE3 at E-boxes in the gene proximal promoter. Plays a role in the repression of hematopoietic precursor cell growth. Promotes IL2 deprivation-induced apoptosis in T-lymphocytes, via repression of TSC22D3/GILZ transcription and activation of the caspase cascade. Its function is as follows. May act to negatively regulate TGFB3 signaling and thereby inhibit cell death in mammary gland cells. In terms of biological role, positively regulates cell death in response to TGFB3 during mammary gland involution. The protein is TSC22 domain family protein 1 of Rattus norvegicus (Rat).